A 360-amino-acid polypeptide reads, in one-letter code: Phenylalanine--tRNA ligase alpha subunit (360 aa).

A Mg(2+)-binding site is contributed by glutamate 260.

Belongs to the class-II aminoacyl-tRNA synthetase family. Phe-tRNA synthetase alpha subunit type 1 subfamily. Tetramer of two alpha and two beta subunits. Requires Mg(2+) as cofactor.

The protein resides in the cytoplasm. The catalysed reaction is tRNA(Phe) + L-phenylalanine + ATP = L-phenylalanyl-tRNA(Phe) + AMP + diphosphate + H(+). In Bradyrhizobium sp. (strain BTAi1 / ATCC BAA-1182), this protein is Phenylalanine--tRNA ligase alpha subunit.